We begin with the raw amino-acid sequence, 83 residues long: uncharacterized protein (83 aa).

3 consecutive transmembrane segments (helical) span residues 4 to 24 (AILS…GVLM), 32 to 52 (IGNI…LKAF), and 54 to 74 (YYDL…IIIG).

The protein localises to the cell membrane. This is an uncharacterized protein from Methanocaldococcus jannaschii (strain ATCC 43067 / DSM 2661 / JAL-1 / JCM 10045 / NBRC 100440) (Methanococcus jannaschii).